We begin with the raw amino-acid sequence, 321 residues long: Lactamase-like protein notP (321 aa).

Histidine 108, histidine 110, aspartate 112, and histidine 113 together coordinate Zn(2+). Catalysis depends on aspartate 112, which acts as the Proton donor/acceptor.

Belongs to the metallo-beta-lactamase superfamily. Zn(2+) is required as a cofactor.

In terms of biological role, lactamase-like protein; part of the gene cluster that mediates the biosynthesis of notoamide, a fungal indole alkaloid that belongs to a family of natural products containing a characteristic bicyclo[2.2.2]diazaoctane core. The first step of notoamide biosynthesis involves coupling of L-proline and L-tryptophan by the bimodular NRPS notE, to produce cyclo-L-tryptophan-L-proline called brevianamide F. The reverse prenyltransferase notF then acts as a deoxybrevianamide E synthase and converts brevianamide F to deoxybrevianamide E via reverse prenylation at C-2 of the indole ring leading to the bicyclo[2.2.2]diazaoctane core. Deoxybrevianamide E is further hydroxylated at C-6 of the indole ring, likely catalyzed by the cytochrome P450 monooxygenase notG, to yield 6-hydroxy-deoxybrevianamide E. 6-hydroxy-deoxybrevianamide E is a specific substrate of the prenyltransferase notC for normal prenylation at C-7 to produce 6-hydroxy-7-prenyl-deoxybrevianamide, also called notoamide S. As the proposed pivotal branching point in notoamide biosynthesis, notoamide S can be diverted to notoamide E through an oxidative pyran ring closure putatively catalyzed by either notH cytochrome P450 monooxygenase or the notD FAD-linked oxidoreductase. This step would be followed by an indole 2,3-epoxidation-initiated pinacol-like rearrangement catalyzed by the notB FAD-dependent monooxygenase leading to the formation of notoamide C and notoamide D. On the other hand notoamide S is converted to notoamide T by notH (or notD), a bifunctional oxidase that also functions as the intramolecular Diels-Alderase responsible for generation of (+)-notoamide T. To generate antipodal (-)-notoaminide T, notH' (or notD') in Aspergillus versicolor is expected to catalyze a Diels-Alder reaction leading to the opposite stereochemistry. The remaining oxidoreductase notD (or notH) likely catalyzes the oxidative pyran ring formation to yield (+)-stephacidin A. The FAD-dependent monooxygenase notI is highly similar to notB and is predicted to catalyze a similar conversion from (+)-stephacidin A to (-)-notoamide B via the 2,3-epoxidation of (+)-stephacidin A followed by a pinacol-type rearrangement. Finally, it remains unclear which enzyme could be responsible for the final hydroxylation steps leading to notoamide A and sclerotiamide. The function of notP in the notoamide biosynthesis has not been determined yet. In Aspergillus sp. (strain MF297-2), this protein is Lactamase-like protein notP.